The chain runs to 212 residues: Prolactin (212 aa).

The N-terminal stretch at 1–24 is a signal peptide; it reads MAQRKTNGSKLFMMVLYMVAACSA. 2 cysteine pairs are disulfide-bonded: Cys-70/Cys-185 and Cys-202/Cys-212.

This sequence belongs to the somatotropin/prolactin family. Pituitary gland.

Its subcellular location is the secreted. The chain is Prolactin (prl) from Dicentrarchus labrax (European seabass).